The primary structure comprises 168 residues: Large ribosomal subunit protein uL10 (168 aa).

The protein belongs to the universal ribosomal protein uL10 family. In terms of assembly, part of the ribosomal stalk of the 50S ribosomal subunit. The N-terminus interacts with L11 and the large rRNA to form the base of the stalk. The C-terminus forms an elongated spine to which L12 dimers bind in a sequential fashion forming a multimeric L10(L12)X complex.

Its function is as follows. Forms part of the ribosomal stalk, playing a central role in the interaction of the ribosome with GTP-bound translation factors. The chain is Large ribosomal subunit protein uL10 (rplJ) from Buchnera aphidicola subsp. Baizongia pistaciae (strain Bp).